The chain runs to 480 residues: Proline--tRNA ligase (480 aa).

The protein belongs to the class-II aminoacyl-tRNA synthetase family. ProS type 3 subfamily. As to quaternary structure, homodimer.

The protein resides in the cytoplasm. The catalysed reaction is tRNA(Pro) + L-proline + ATP = L-prolyl-tRNA(Pro) + AMP + diphosphate. Catalyzes the attachment of proline to tRNA(Pro) in a two-step reaction: proline is first activated by ATP to form Pro-AMP and then transferred to the acceptor end of tRNA(Pro). The chain is Proline--tRNA ligase from Chloroflexus aurantiacus (strain ATCC 29364 / DSM 637 / Y-400-fl).